The sequence spans 477 residues: ETS translocation variant 1 (477 aa).

Phosphoserine is present on S94. The tract at residues P128–T179 is disordered. Residues S191 and S216 each carry the phosphoserine; by RPS6KA1 and RPS6KA5 modification. Residue K317 forms a Glycyl lysine isopeptide (Lys-Gly) (interchain with G-Cter in SUMO2) linkage. Residues L335 to V415 constitute a DNA-binding region (ETS).

The protein belongs to the ETS family. In terms of processing, sumoylated. Post-translationally, phosphorylated at Ser-191 and Ser-216 by RPS6KA1 and RPS6KA5; phosphorylation activates transcriptional activity. In terms of tissue distribution, abundant in kidney. Moderate levels seen in the heart, brain, lung, embryo and lower levels seen in spleen, intestine, testis and thymus.

It localises to the nucleus. In terms of biological role, transcriptional activator that binds to DNA sequences containing the consensus pentanucleotide 5'-CGGA[AT]-3'. Required for olfactory dopaminergic neuron differentiation; may directly activate expression of tyrosine hydroxylase (TH). The polypeptide is ETS translocation variant 1 (Mus musculus (Mouse)).